The following is a 450-amino-acid chain: Involucrin (450 aa).

Positions 1–19 are enriched in polar residues; the sequence is MSQQHTLPVTLPPTLSQEL. Disordered regions lie at residues 1–43, 77–370, and 422–450; these read MSQQ…LPAP, QLQQ…EQLK, and PGQV…EPEV. Positions 86-108 are enriched in basic and acidic residues; that stretch reads QEVHLAKHQELQELQEQELHLGK. Residues 120–135 are compositionally biased toward low complexity; it reads GKQQQQQESQEQELYL. Composition is skewed to basic and acidic residues over residues 187–200 and 264–281; these read LGKR…ELHL and QELH…ELHL. Residues 295 to 344 are compositionally biased toward low complexity; sequence GEAAAAGVTGAGPAASKAARRATGAGTAPGKAAAAAGATGAGTAATAPAT. A compositionally biased stretch (basic and acidic residues) spans 345 to 370; that stretch reads AEERQKAESLEQQLEQEKAQREEQLK.

Belongs to the involucrin family. As to quaternary structure, directly or indirectly cross-linked to cornifelin (CNFN). Post-translationally, substrate of transglutaminase. Specific glutamines or lysines are cross-linked to keratins, desmoplakin and to inter involucrin molecules. In terms of tissue distribution, keratinocytes of epidermis and other stratified squamous epithelia.

The protein resides in the cytoplasm. Its function is as follows. Part of the insoluble cornified cell envelope (CE) of stratified squamous epithelia. In Lemur catta (Ring-tailed lemur), this protein is Involucrin (IVL).